Consider the following 104-residue polypeptide: Fusaric acid biosynthesis protein 2 (104 aa).

This sequence belongs to the YciI family.

The protein operates within mycotoxin biosynthesis. Its function is as follows. Part of the gene cluster that mediates the biosynthesis of fusaric acid, a mycotoxin with low to moderate toxicity to animals and humans, but with high phytotoxic properties. L-aspartate is suggested as fusaric acid amino acid precursor that is activated and further processed to O-acetyl-L-homoserine by cluster enzymes aspartate kinase FUB3 and homoserine O-acetyltransferase FUB5, as well as enzymes of the primary metabolism. The polyketide synthase (PKS) FUB1 generates the triketide trans-2-hexenal which is presumptively released by the hydrolase FUB4 and linked to the NRPS-bound amino acid precursor by NAD(P)-dependent dehydrogenase FUB6. FUB1, FUB4, and the non-canonical NRPS Fub8 may form an enzyme complex. Further processing of the NRPS-bound intermediate might be carried out by FUB6 and the sulfhydrylase FUB7, enabling a spontaneous electrocyclization to close the carbon backbone of fusaric acid. Dihydrofusaric acid is likely to be released via reduction by the thioester reductase (TR) domain of FUB8 whereupon the final oxidation to fusaric acid may (also) be performed by the FMN-dependent dehydrogenase FUB9. This is Fusaric acid biosynthesis protein 2 from Gibberella fujikuroi (strain CBS 195.34 / IMI 58289 / NRRL A-6831) (Bakanae and foot rot disease fungus).